Here is a 375-residue protein sequence, read N- to C-terminus: Succinyl-diaminopimelate desuccinylase (375 aa).

His66 contacts Zn(2+). Residue Asp68 is part of the active site. A Zn(2+)-binding site is contributed by Asp99. Residue Glu133 is the Proton acceptor of the active site. Zn(2+) is bound by residues Glu134, Glu162, and His348.

Belongs to the peptidase M20A family. DapE subfamily. In terms of assembly, homodimer. Zn(2+) is required as a cofactor. It depends on Co(2+) as a cofactor.

It carries out the reaction N-succinyl-(2S,6S)-2,6-diaminopimelate + H2O = (2S,6S)-2,6-diaminopimelate + succinate. Its pathway is amino-acid biosynthesis; L-lysine biosynthesis via DAP pathway; LL-2,6-diaminopimelate from (S)-tetrahydrodipicolinate (succinylase route): step 3/3. Catalyzes the hydrolysis of N-succinyl-L,L-diaminopimelic acid (SDAP), forming succinate and LL-2,6-diaminopimelate (DAP), an intermediate involved in the bacterial biosynthesis of lysine and meso-diaminopimelic acid, an essential component of bacterial cell walls. The polypeptide is Succinyl-diaminopimelate desuccinylase (Enterobacter sp. (strain 638)).